The sequence spans 878 residues: Alanine--tRNA ligase (878 aa).

4 residues coordinate Zn(2+): His568, His572, Cys669, and His673.

This sequence belongs to the class-II aminoacyl-tRNA synthetase family. Zn(2+) is required as a cofactor.

The protein localises to the cytoplasm. The enzyme catalyses tRNA(Ala) + L-alanine + ATP = L-alanyl-tRNA(Ala) + AMP + diphosphate. In terms of biological role, catalyzes the attachment of alanine to tRNA(Ala) in a two-step reaction: alanine is first activated by ATP to form Ala-AMP and then transferred to the acceptor end of tRNA(Ala). Also edits incorrectly charged Ser-tRNA(Ala) and Gly-tRNA(Ala) via its editing domain. This Polaromonas sp. (strain JS666 / ATCC BAA-500) protein is Alanine--tRNA ligase.